Consider the following 431-residue polypeptide: UDP-N-acetylmuramate--L-alanine ligase (431 aa).

108–114 (GSHGKTS) lines the ATP pocket.

It belongs to the MurCDEF family.

The protein resides in the cytoplasm. The catalysed reaction is UDP-N-acetyl-alpha-D-muramate + L-alanine + ATP = UDP-N-acetyl-alpha-D-muramoyl-L-alanine + ADP + phosphate + H(+). It participates in cell wall biogenesis; peptidoglycan biosynthesis. Its function is as follows. Cell wall formation. The polypeptide is UDP-N-acetylmuramate--L-alanine ligase (Macrococcus caseolyticus (strain JCSC5402) (Macrococcoides caseolyticum)).